The following is a 30-amino-acid chain: Cyclotide hyen-L (30 aa).

A cross-link (cyclopeptide (Gly-Asn)) is located at residues 1–30 (GIPCAESCVYIPCTVTALLGCSCSDKVCYN). 3 disulfide bridges follow: C4–C21, C8–C23, and C13–C28.

In terms of processing, this is a cyclic peptide. Detected in stems (at protein level).

Functionally, probably participates in a plant defense mechanism. Has cytotoxic activity against HUVEC cells (LC(50)= 2.26 uM) and various cancer cells including HeLa (LC(50)= 3.48 uM), MCF-7 and K562. Displays very weak hemolytic activity. Binds to and induces leakage in phospholipd membranes, particularly ones containing 1-palmitoyl-2-oleophosphatidylethanolamine (POPE). This chain is Cyclotide hyen-L, found in Pigea enneasperma (Spade flower).